The sequence spans 217 residues: UPF0711 protein C18orf21 homolog (217 aa).

The residue at position 126 (Ser-126) is a Phosphoserine. 2 positions are modified to phosphothreonine: Thr-130 and Thr-139. The tract at residues 131-190 (AANKASPKTPKRTAPGSANLGQSTNGSKGKSPSLTIRTPTSGQSTPICSSRNGSKRKKHF) is disordered. Residues 149–182 (NLGQSTNGSKGKSPSLTIRTPTSGQSTPICSSRN) show a composition bias toward polar residues.

The protein belongs to the UPF0711 family.

This Mus musculus (Mouse) protein is UPF0711 protein C18orf21 homolog.